We begin with the raw amino-acid sequence, 59 residues long: Insulin (59 aa).

3 disulfides stabilise this stretch: C7-C45, C19-C58, and C44-C49.

The protein belongs to the insulin family. In terms of assembly, heterodimer of a B chain and an A chain linked by two disulfide bonds.

The protein localises to the secreted. Its function is as follows. Insulin decreases blood glucose concentration. It increases cell permeability to monosaccharides, amino acids and fatty acids. It accelerates glycolysis, the pentose phosphate cycle, and glycogen synthesis in liver. This chain is Insulin (ins), found in Chimaera monstrosa (Rabbit fish).